The chain runs to 52 residues: Phospholamban (52 aa).

Met-1 is subject to N-acetylmethionine. Residues 1–31 are Cytoplasmic-facing; sequence MEKVQYLTRSAIRRASTIEMPQQARQKLQNL. Ser-16 is subject to Phosphoserine; by PKA and DMPK. The tract at residues 16–22 is involved in HAX1 binding; it reads STIEMPQ. Phosphothreonine; by CaMK2 is present on Thr-17. A helical membrane pass occupies residues 32–52; that stretch reads FINFCLILICLLLICIIVMLL. Cys-36 carries S-palmitoyl cysteine lipidation.

The protein belongs to the phospholamban family. As to quaternary structure, homopentamer. Can also form heterooligomers with other sarcoplasmic/endoplasmic reticulum calcium ATPase (SERCA) regulators ARLN, ERLN, SLN and STRIT1/DWORF. Monomer. Interacts with HAX1. Interacts as a monomer with ATP2A2; the interaction decreases ATP2A2 Ca(2+) affinity. Interacts with VMP1; VMP1 competes with PLN and SLN to prevent them from forming an inhibitory complex with ATP2A2. Interacts with S100A1 in a Ca(2+)-dependent manner. Post-translationally, phosphorylation by PKA abolishes the inhibition of ATP2A2-mediated calcium uptake. Phosphorylated at Thr-17 by CaMK2, and in response to beta-adrenergic stimulation. Phosphorylation by DMPK may stimulate sarcoplasmic reticulum calcium uptake in cardiomyocytes. In terms of processing, palmitoylated by ZDHHC16, promoting formation of the homopentamer. In elongated spermatids, proteolytically cleaved by SPPL2C which modulates intracellular Ca(2+) homeostasis. In terms of tissue distribution, heart muscle (at protein level).

Its subcellular location is the endoplasmic reticulum membrane. It localises to the sarcoplasmic reticulum membrane. The protein localises to the mitochondrion membrane. The protein resides in the membrane. In terms of biological role, reversibly inhibits the activity of ATP2A2/SERCA2 in cardiac sarcoplasmic reticulum by decreasing the apparent affinity of the ATPase for Ca(2+). Binds preferentially to the ATP-bound E1 conformational form of ATP2A2 which predominates at low Ca(2+) concentrations during the diastolic phase of the cardiac cycle. Inhibits ATP2A2 Ca(2+) affinity by disrupting its allosteric activation by ATP. Modulates the contractility of the heart muscle in response to physiological stimuli via its effects on ATP2A2. Modulates calcium re-uptake during muscle relaxation and plays an important role in calcium homeostasis in the heart muscle. The degree of ATP2A2 inhibition depends on the oligomeric state of PLN. ATP2A2 inhibition is alleviated by PLN phosphorylation. Also inhibits the activity of ATP2A3/SERCA3. Controls intracellular Ca(2+) levels in elongated spermatids and may play a role in germ cell differentiation. In the thalamic reticular nucleus of the brain, plays a role in the regulation of sleep patterns and executive functioning. In Homo sapiens (Human), this protein is Phospholamban.